The sequence spans 276 residues: Rhomboid protease GlpG (276 aa).

Helical transmembrane passes span 94-114 (GPVT…MSLI), 142-162 (IFMH…WYLG), 169-189 (LGSG…GYVQ), 192-212 (FSGP…GYVW), 229-249 (LIIF…GMSM), and 250-270 (ANGA…VDTL). Residue Ser-201 is the Nucleophile of the active site. His-254 is a catalytic residue.

Belongs to the peptidase S54 family.

The protein localises to the cell inner membrane. The enzyme catalyses Cleaves type-1 transmembrane domains using a catalytic dyad composed of serine and histidine that are contributed by different transmembrane domains.. Rhomboid-type serine protease that catalyzes intramembrane proteolysis. The sequence is that of Rhomboid protease GlpG from Salmonella choleraesuis (strain SC-B67).